The sequence spans 231 residues: Adenosylcobinamide-GDP ribazoletransferase (231 aa).

The next 6 helical transmembrane spans lie at 24 to 44 (LWAF…ILYL), 46 to 66 (LPLS…LLHL), 96 to 116 (IAGL…LQLL), 159 to 176 (LALG…VVLF), 181 to 198 (LAGI…RISL), and 209 to 229 (LGAT…LVWW).

This sequence belongs to the CobS family. Requires Mg(2+) as cofactor.

Its subcellular location is the cell membrane. The catalysed reaction is alpha-ribazole + adenosylcob(III)inamide-GDP = adenosylcob(III)alamin + GMP + H(+). It carries out the reaction alpha-ribazole 5'-phosphate + adenosylcob(III)inamide-GDP = adenosylcob(III)alamin 5'-phosphate + GMP + H(+). It participates in cofactor biosynthesis; adenosylcobalamin biosynthesis; adenosylcobalamin from cob(II)yrinate a,c-diamide: step 7/7. Functionally, joins adenosylcobinamide-GDP and alpha-ribazole to generate adenosylcobalamin (Ado-cobalamin). Also synthesizes adenosylcobalamin 5'-phosphate from adenosylcobinamide-GDP and alpha-ribazole 5'-phosphate. This chain is Adenosylcobinamide-GDP ribazoletransferase, found in Thermococcus kodakarensis (strain ATCC BAA-918 / JCM 12380 / KOD1) (Pyrococcus kodakaraensis (strain KOD1)).